Reading from the N-terminus, the 459-residue chain is MNRLPSSASALACSAHALNLIEKRTLNHEEMKALNREVIDYFKEHVNPGFLEYRKSVTAGGDYGAVEWQAGSLNTLVDTQGQEFIDCLGGFGIFNVGHRNPVVVSAVQNQLAKQPLHSQELLDPLRAMLAKTLAALTPGKLKYSFFCNSGTESVEAALKLAKAYQSPRGKFTFIATSGAFHGKSLGALSATAKSTFRRPFMPLLPGFRHVPFGNIDAMSMAFSEGKKTGDEIAAVILEPIQGEGGVILPPQGYLTEVRKLCDEFGALMILDEVQTGMGRTGKMFACEHENVQPDILCLAKALGGGVMPIGATIATEEVFSVLFDNPFLHTTTFGGNPLACAAALATINVLLEQNLPAQAEQKGDTLLDSFRQLAREYPNLVHEARGKGMLMAIEFVDNETGYRFASEMFRQRVLVAGTLNNAKTIRIEPPLTLTIELCEQVLKSARNALAAMQVSVEEV.

Pyridoxal 5'-phosphate-binding positions include 150-151 (GT) and glutamine 274. Lysine 300 is subject to N6-(pyridoxal phosphate)lysine. Position 332 (threonine 332) interacts with pyridoxal 5'-phosphate.

Belongs to the class-III pyridoxal-phosphate-dependent aminotransferase family. Putrescine aminotransferase subfamily. Pyridoxal 5'-phosphate serves as cofactor.

It catalyses the reaction an alkane-alpha,omega-diamine + 2-oxoglutarate = an omega-aminoaldehyde + L-glutamate. The catalysed reaction is putrescine + 2-oxoglutarate = 1-pyrroline + L-glutamate + H2O. It carries out the reaction cadaverine + 2-oxoglutarate = 5-aminopentanal + L-glutamate. The protein operates within amine and polyamine degradation; putrescine degradation; 4-aminobutanal from putrescine (transaminase route): step 1/1. In terms of biological role, catalyzes the aminotransferase reaction from putrescine to 2-oxoglutarate, leading to glutamate and 4-aminobutanal, which spontaneously cyclizes to form 1-pyrroline. This is the first step in one of two pathways for putrescine degradation, where putrescine is converted into 4-aminobutanoate (gamma-aminobutyrate or GABA) via 4-aminobutanal. Also functions as a cadaverine transaminase in a a L-lysine degradation pathway to succinate that proceeds via cadaverine, glutarate and L-2-hydroxyglutarate. The polypeptide is Putrescine aminotransferase (Salmonella paratyphi A (strain ATCC 9150 / SARB42)).